The chain runs to 420 residues: Carbohydrate sulfotransferase 12 (420 aa).

The Cytoplasmic segment spans residues Met1 to Arg5. A helical; Signal-anchor for type II membrane protein transmembrane segment spans residues Leu6–Trp26. At Asp27–Val420 the chain is on the lumenal side. N-linked (GlcNAc...) asparagine glycosylation is found at Asn76 and Asn139. Pro176 to Asn182 lines the 3'-phosphoadenylyl sulfate pocket. An N-linked (GlcNAc...) asparagine glycan is attached at Asn215. Residue Arg251–Ser259 coordinates 3'-phosphoadenylyl sulfate. Asn286 and Asn376 each carry an N-linked (GlcNAc...) asparagine glycan.

This sequence belongs to the sulfotransferase 2 family.

It is found in the golgi apparatus membrane. The catalysed reaction is chondroitin beta-D-glucuronate + n 3'-phosphoadenylyl sulfate = chondroitin 4'-sulfate + n adenosine 3',5'-bisphosphate + n H(+). Functionally, catalyzes the transfer of sulfate to position 4 of the N-acetylgalactosamine (GalNAc) residue of chondroitin and desulfated dermatan sulfate. Chondroitin sulfate constitutes the predominant proteoglycan present in cartilage and is distributed on the surfaces of many cells and extracellular matrices. This is Carbohydrate sulfotransferase 12 (chst12) from Xenopus laevis (African clawed frog).